The following is a 206-amino-acid chain: Thymidylate kinase (206 aa).

Residue 11–18 (GIDGAGKT) coordinates ATP.

The protein belongs to the thymidylate kinase family.

The catalysed reaction is dTMP + ATP = dTDP + ADP. Phosphorylation of dTMP to form dTDP in both de novo and salvage pathways of dTTP synthesis. This chain is Thymidylate kinase, found in Burkholderia ambifaria (strain MC40-6).